Here is a 239-residue protein sequence, read N- to C-terminus: Interleukin-27 subunit alpha (239 aa).

A signal peptide spans 1–28 (MGQMADDLGWRLSLLLLSLLLARAGVWG). An N-linked (GlcNAc...) asparagine glycan is attached at N89. Residues 167–186 (EEENEAGRELLPGAPGGPSK) are disordered.

It belongs to the IL-6 superfamily. In terms of assembly, heterodimer with EBI3; not disulfide-linked. This heterodimer is known as interleukin IL-27. In terms of processing, O-glycosylated.

It is found in the secreted. Its function is as follows. Associates with EBI3 to form the IL-27 interleukin, a heterodimeric cytokine which functions in innate immunity. Cytokine with pro- and anti-inflammatory properties, that can regulate T-helper cell development, suppress T-cell proliferation, stimulate cytotoxic T-cell activity, induce isotype switching in B-cells, and that has diverse effects on innate immune cells. Among its target cells are CD4 T-helper cells which can differentiate in type 1 effector cells (TH1), type 2 effector cells (TH2) and IL17 producing helper T-cells (TH17). It drives rapid clonal expansion of naive but not memory CD4 T-cells. It also strongly synergizes with IL-12 to trigger interferon-gamma/IFN-gamma production of naive CD4 T-cells, binds to the cytokine receptor WSX-1/TCCR which appears to be required but not sufficient for IL-27-mediated signal transduction. IL-27 potentiate the early phase of TH1 response and suppress TH2 and TH17 differentiation. It induces the differentiation of TH1 cells via two distinct pathways, p38 MAPK/TBX21- and ICAM1/ITGAL/ERK-dependent pathways. It also induces STAT1, STAT3, STAT4 and STAT5 phosphorylation and activates TBX21/T-Bet via STAT1 with resulting IL12RB2 up-regulation, an event crucial to TH1 cell commitment. It suppresses the expression of GATA3, the inhibitor TH1 cells development. In CD8 T-cells, it activates STATs as well as GZMB. IL-27 reveals to be a potent inhibitor of TH17 cell development and of IL-17 production. Indeed IL27 alone is also able to inhibit the production of IL17 by CD4 and CD8 T-cells. While IL-27 suppressed the development of pro-inflammatory Th17 cells via STAT1, it inhibits the development of anti-inflammatory inducible regulatory T-cells, iTreg, independently of STAT1. IL-27 also has an effect on cytokine production, it suppresses pro-inflammatory cytokine production such as IL2, IL4, IL5 and IL6 and activates suppressors of cytokine signaling such as SOCS1 and SOCS3. Apart from suppression of cytokine production, IL-27 also antagonizes the effects of some cytokines such as IL6 through direct effects on T-cells. Another important role of IL-27 is its antitumor activity as well as its antiangiogenic activity with activation of production of antiangiogenic chemokines such as IP-10/CXCL10 and MIG/CXCL9. In vein endothelial cells, it induces IRF1/interferon regulatory factor 1 and increase the expression of MHC class II transactivator/CIITA with resulting up-regulation of major histocompatibility complex class II. This chain is Interleukin-27 subunit alpha (IL27), found in Sus scrofa (Pig).